Here is a 750-residue protein sequence, read N- to C-terminus: Photosystem I P700 chlorophyll a apoprotein A1 (750 aa).

The next 8 membrane-spanning stretches (helical) occupy residues 70–93, 156–179, 195–219, 291–309, 346–369, 385–411, 433–455, and 531–549; these read VFSA…FHGA, LYCT…FHYH, LNHH…HVSL, IAHH…GHMY, WHAQ…HHMY, LSLF…IFMV, AIIS…LYIH, and FLVH…LILL. Cysteine 573 and cysteine 582 together coordinate [4Fe-4S] cluster. 2 helical membrane-spanning segments follow: residues 589 to 610 and 664 to 686; these read HVFL…HFSW and LSAY…MFLF. Histidine 675 contacts chlorophyll a'. Residues methionine 683 and tyrosine 691 each contribute to the chlorophyll a site. Residue tryptophan 692 coordinates phylloquinone. Residues 724-744 traverse the membrane as a helical segment; that stretch reads AVGVTHYLLGGIATTWAFFLA.

This sequence belongs to the PsaA/PsaB family. In terms of assembly, the PsaA/B heterodimer binds the P700 chlorophyll special pair and subsequent electron acceptors. PSI consists of a core antenna complex that captures photons, and an electron transfer chain that converts photonic excitation into a charge separation. The eukaryotic PSI reaction center is composed of at least 11 subunits. The cofactor is P700 is a chlorophyll a/chlorophyll a' dimer, A0 is one or more chlorophyll a, A1 is one or both phylloquinones and FX is a shared 4Fe-4S iron-sulfur center..

The protein resides in the plastid. Its subcellular location is the chloroplast thylakoid membrane. The catalysed reaction is reduced [plastocyanin] + hnu + oxidized [2Fe-2S]-[ferredoxin] = oxidized [plastocyanin] + reduced [2Fe-2S]-[ferredoxin]. PsaA and PsaB bind P700, the primary electron donor of photosystem I (PSI), as well as the electron acceptors A0, A1 and FX. PSI is a plastocyanin-ferredoxin oxidoreductase, converting photonic excitation into a charge separation, which transfers an electron from the donor P700 chlorophyll pair to the spectroscopically characterized acceptors A0, A1, FX, FA and FB in turn. Oxidized P700 is reduced on the lumenal side of the thylakoid membrane by plastocyanin. The protein is Photosystem I P700 chlorophyll a apoprotein A1 of Solanum bulbocastanum (Wild potato).